Reading from the N-terminus, the 323-residue chain is Cysteine synthase A (323 aa).

The hydrogen sulfide site is built by asparagine 8 and arginine 35. An N6-(pyridoxal phosphate)lysine modification is found at lysine 42. Pyridoxal 5'-phosphate contacts are provided by residues asparagine 72 and 177-181 (GTGGT). Leucine 269 contributes to the hydrogen sulfide binding site. Position 273 (serine 273) interacts with pyridoxal 5'-phosphate.

It belongs to the cysteine synthase/cystathionine beta-synthase family. In terms of assembly, homodimer. Pyridoxal 5'-phosphate is required as a cofactor.

The enzyme catalyses O-acetyl-L-serine + hydrogen sulfide = L-cysteine + acetate. It functions in the pathway amino-acid biosynthesis; L-cysteine biosynthesis; L-cysteine from L-serine: step 2/2. The sequence is that of Cysteine synthase A (cysK) from Escherichia coli O157:H7.